The sequence spans 167 residues: Interferon gamma (167 aa).

Residues 1 to 23 (MNYTSFIFAFQLCIILCSSGYYC) form the signal peptide. A Pyrrolidone carboxylic acid modification is found at Gln-24. Asn-39 and Asn-107 each carry an N-linked (GlcNAc...) asparagine glycan.

Belongs to the type II (or gamma) interferon family. Homodimer. Interacts with IFNGR1 (via extracellular domain); this interaction promotes IFNGR1 dimerization. As to expression, released primarily from activated T lymphocytes.

It is found in the secreted. Functionally, type II interferon produced by immune cells such as T-cells and NK cells that plays crucial roles in antimicrobial, antiviral, and antitumor responses by activating effector immune cells and enhancing antigen presentation. Primarily signals through the JAK-STAT pathway after interaction with its receptor IFNGR1 to affect gene regulation. Upon IFNG binding, IFNGR1 intracellular domain opens out to allow association of downstream signaling components JAK2, JAK1 and STAT1, leading to STAT1 activation, nuclear translocation and transcription of IFNG-regulated genes. Many of the induced genes are transcription factors such as IRF1 that are able to further drive regulation of a next wave of transcription. Plays a role in class I antigen presentation pathway by inducing a replacement of catalytic proteasome subunits with immunoproteasome subunits. In turn, increases the quantity, quality, and repertoire of peptides for class I MHC loading. Increases the efficiency of peptide generation also by inducing the expression of activator PA28 that associates with the proteasome and alters its proteolytic cleavage preference. Up-regulates as well MHC II complexes on the cell surface by promoting expression of several key molecules such as cathepsins B/CTSB, H/CTSH, and L/CTSL. Participates in the regulation of hematopoietic stem cells during development and under homeostatic conditions by affecting their development, quiescence, and differentiation. The chain is Interferon gamma (IFNG) from Felis catus (Cat).